A 399-amino-acid chain; its full sequence is Elongation factor Tu (399 aa).

Residues 10–204 (KPHVNIGTIG…AVDASIPEPE (195 aa)) enclose the tr-type G domain. Residues 19–26 (GHVDHGKT) are G1. 19-26 (GHVDHGKT) contributes to the GTP binding site. T26 provides a ligand contact to Mg(2+). A G2 region spans residues 60–64 (GITIN). Residues 81-84 (DCPG) form a G3 region. GTP-binding positions include 81 to 85 (DCPGH) and 136 to 139 (NKCD). A G4 region spans residues 136–139 (NKCD). The interval 174–176 (SGL) is G5.

Belongs to the TRAFAC class translation factor GTPase superfamily. Classic translation factor GTPase family. EF-Tu/EF-1A subfamily. As to quaternary structure, monomer.

It localises to the cytoplasm. It catalyses the reaction GTP + H2O = GDP + phosphate + H(+). In terms of biological role, GTP hydrolase that promotes the GTP-dependent binding of aminoacyl-tRNA to the A-site of ribosomes during protein biosynthesis. This Prochlorococcus marinus subsp. pastoris (strain CCMP1986 / NIES-2087 / MED4) protein is Elongation factor Tu.